Reading from the N-terminus, the 327-residue chain is Zinc transport protein ZntB (327 aa).

Residues 1 to 271 (MDVVEGKALQ…AMNRRTYTMS (271 aa)) are Cytoplasmic-facing. The chain crosses the membrane as a helical span at residues 272 to 292 (LLAMVFLPTTFLTGLFGVNLG). Topologically, residues 293 to 300 (GIPGNTDA) are periplasmic. A helical transmembrane segment spans residues 301–321 (FGFTIFCMMLVVLVLSVAWWL). The Cytoplasmic segment spans residues 322-327 (KRSKWL).

It belongs to the CorA metal ion transporter (MIT) (TC 1.A.35) family.

The protein localises to the cell inner membrane. The catalysed reaction is Zn(2+)(out) + H(+)(out) = Zn(2+)(in) + H(+)(in). Zinc transporter. Acts as a Zn(2+):proton symporter, which likely mediates zinc ion uptake. This is Zinc transport protein ZntB from Yersinia pseudotuberculosis serotype O:1b (strain IP 31758).